The sequence spans 341 residues: Glycerol-3-phosphate dehydrogenase [NAD(P)+] (341 aa).

4 residues coordinate NADPH: serine 14, phenylalanine 15, arginine 35, and lysine 108. Sn-glycerol 3-phosphate contacts are provided by lysine 108 and glycine 136. Alanine 140 is an NADPH binding site. 5 residues coordinate sn-glycerol 3-phosphate: lysine 191, aspartate 244, serine 254, arginine 255, and asparagine 256. The active-site Proton acceptor is the lysine 191. Residue arginine 255 participates in NADPH binding. Residues valine 279 and glutamate 281 each coordinate NADPH.

This sequence belongs to the NAD-dependent glycerol-3-phosphate dehydrogenase family.

The protein localises to the cytoplasm. It catalyses the reaction sn-glycerol 3-phosphate + NAD(+) = dihydroxyacetone phosphate + NADH + H(+). The catalysed reaction is sn-glycerol 3-phosphate + NADP(+) = dihydroxyacetone phosphate + NADPH + H(+). The protein operates within membrane lipid metabolism; glycerophospholipid metabolism. In terms of biological role, catalyzes the reduction of the glycolytic intermediate dihydroxyacetone phosphate (DHAP) to sn-glycerol 3-phosphate (G3P), the key precursor for phospholipid synthesis. The chain is Glycerol-3-phosphate dehydrogenase [NAD(P)+] from Pseudomonas savastanoi pv. phaseolicola (strain 1448A / Race 6) (Pseudomonas syringae pv. phaseolicola (strain 1448A / Race 6)).